The sequence spans 538 residues: CWF19-like protein 1 (538 aa).

Residues 298-324 (QGRKRSSTGRDSKSSPHPKQPRKPPQP) form a disordered region.

It belongs to the CWF19 family. As to expression, expressed in many brain regions, including cerebellum, thalamus and occipital, parietal and temporal lobes (at protein level). Also expressed in the spinal cord (at protein level).

The polypeptide is CWF19-like protein 1 (CWF19L1) (Homo sapiens (Human)).